A 180-amino-acid chain; its full sequence is Superoxide dismutase [Cu-Zn] (180 aa).

An N-terminal signal peptide occupies residues 1–19; it reads MFMNLLSQVSNAIFPQVEA. H68, H70, and H85 together coordinate Cu cation. C79 and C171 are oxidised to a cystine. 4 residues coordinate Zn(2+): H85, H93, H102, and D105. Position 142 (H142) interacts with Cu cation.

This sequence belongs to the Cu-Zn superoxide dismutase family. In terms of assembly, homodimer. Requires Cu cation as cofactor. Zn(2+) is required as a cofactor.

It is found in the cytoplasm. It carries out the reaction 2 superoxide + 2 H(+) = H2O2 + O2. In terms of biological role, destroys radicals which are normally produced within the cells and which are toxic to biological systems. Required for normal brood size. May be involved in regulating mpk-1 phosphorylation downstream of phosphatase ptp-2 during oocyte maturation. The sequence is that of Superoxide dismutase [Cu-Zn] from Caenorhabditis briggsae.